We begin with the raw amino-acid sequence, 900 residues long: Methionine--tRNA ligase, cytoplasmic (900 aa).

The GST C-terminal domain occupies 74 to 198; that stretch reads GWEQDDLTNQ…VLKQQGVLAL (125 aa). The 'HIGH' region motif lies at 273–283; it reads PYVNNVPHLGN. The 'KMSKS' region signature appears at 593–597; that stretch reads KFSKS. Lys596 contacts ATP. Ser825 is modified (phosphoserine). Thr835 carries the post-translational modification Phosphothreonine. One can recognise a WHEP-TRS domain in the interval 841–897; sequence QIQALMDEVTKQGNIVRELKAQKADKNEVAAEVAKLLDLKKQLAVAEGKPPEAPKGK.

This sequence belongs to the class-I aminoacyl-tRNA synthetase family. Monomer. Part of a multisubunit complex that groups tRNA ligases for Arg (RARS1), Asp (DARS1), Gln (QARS1), Ile (IARS1), Leu (LARS1), Lys (KARS1), Met (MARS1) the bifunctional ligase for Glu and Pro (EPRS1) and the auxiliary subunits AIMP1/p43, AIMP2/p38 and EEF1E1/p18. Forms a linear complex that contains MARS1, EEF1E1, EPRS1 and AIMP2 that is at the core of the multisubunit complex.

The protein localises to the cytoplasm. The protein resides in the cytosol. Its subcellular location is the nucleus. It is found in the nucleolus. It carries out the reaction tRNA(Met) + L-methionine + ATP = L-methionyl-tRNA(Met) + AMP + diphosphate. Its activity is regulated as follows. Enzyme activity is increased by spermidine, EEF1A1, and when the Mg(2+) concentration is increased from 5 mM to 13 mM (in vitro), possibly by promoting the dissociation of the complex between the enzyme and its product. In terms of biological role, catalyzes the specific attachment of an amino acid to its cognate tRNA in a 2 step reaction: the amino acid (AA) is first activated by ATP to form AA-AMP and then transferred to the acceptor end of the tRNA. Plays a role in the synthesis of ribosomal RNA in the nucleolus. This is Methionine--tRNA ligase, cytoplasmic from Homo sapiens (Human).